The primary structure comprises 176 residues: NAD(P)H-quinone oxidoreductase subunit 6, chloroplastic (176 aa).

Transmembrane regions (helical) follow at residues 10 to 30, 32 to 52, 61 to 81, 92 to 112, and 152 to 172; these read FLLV…VLLP, PIFS…LYIL, AQLL…VMFM, LWTV…FSLL, and FFLP…GAIS.

Belongs to the complex I subunit 6 family. As to quaternary structure, NDH is composed of at least 16 different subunits, 5 of which are encoded in the nucleus.

The protein resides in the plastid. The protein localises to the chloroplast thylakoid membrane. The enzyme catalyses a plastoquinone + NADH + (n+1) H(+)(in) = a plastoquinol + NAD(+) + n H(+)(out). It catalyses the reaction a plastoquinone + NADPH + (n+1) H(+)(in) = a plastoquinol + NADP(+) + n H(+)(out). Functionally, NDH shuttles electrons from NAD(P)H:plastoquinone, via FMN and iron-sulfur (Fe-S) centers, to quinones in the photosynthetic chain and possibly in a chloroplast respiratory chain. The immediate electron acceptor for the enzyme in this species is believed to be plastoquinone. Couples the redox reaction to proton translocation, and thus conserves the redox energy in a proton gradient. The protein is NAD(P)H-quinone oxidoreductase subunit 6, chloroplastic (ndhG) of Lepidium virginicum (Virginia pepperweed).